A 261-amino-acid chain; its full sequence is MLFLLSPAKSLDYDTPVPTEVPATQPHFEAPRGPSAELIKLLREKSPQQISELMHLSEKLSALNVARYQAWSGKGTPKNARQAAFAFDGDVYGGLDARSLTPTQLAWAQEHVCILSGLYGLLRPLDLLQPYRLEMGTPLANRHGKDLYAFWGARIAEHLNQRLAADRTPVVVNVASQEYFRSVDRKALKARVVECVFEEWKGDRYKIVSFYAKRARGLLARWAVLHKAATPKALEKFDLEGYGFDATASTAERLVFRRKFG.

This sequence belongs to the UPF0246 family.

The chain is UPF0246 protein Vapar_1301 from Variovorax paradoxus (strain S110).